The following is a 330-amino-acid chain: Cytosolic iron-sulfur protein assembly protein 1 (330 aa).

WD repeat units lie at residues 12–53 (LYKE…DVLD), 56–95 (AHKKAIRSVAWRPHTSLLAAGSFDSTVSIWAKEESADRTF), 105–144 (GHENEVKGVAWSNDGYYLATCSRDKSVWIWETDESGEEYE), 151–190 (EHSQDVKHVIWHPSEALLASSSYDDTVRIWKDYDDDWECV), 195–236 (GHEG…EDDQ), 248–286 (VHKRQVYNVAWGFNGLIASVGADGVLAVYEEVDGEWKVF), and 292–330 (CHGVYEINVVKWLELNGKTILATGGDDGIVNFWSLEKAA).

It belongs to the WD repeat CIA1 family. As to quaternary structure, interacts with NAR1.

The protein resides in the cytoplasm. It localises to the nucleus. Essential component of the cytosolic iron-sulfur (Fe/S) protein assembly machinery. Required for the maturation of extramitochondrial Fe/S proteins. This Saccharomyces cerevisiae (strain ATCC 204508 / S288c) (Baker's yeast) protein is Cytosolic iron-sulfur protein assembly protein 1.